The following is a 516-amino-acid chain: 2-isopropylmalate synthase (516 aa).

Positions 5-267 (VIIFDTTLRD…TTGIKHDEIS (263 aa)) constitute a Pyruvate carboxyltransferase domain. Mn(2+) is bound by residues D14, H202, H204, and N238. A regulatory domain region spans residues 392 to 516 (KLNYLSVQSG…IKQKKSVATV (125 aa)).

This sequence belongs to the alpha-IPM synthase/homocitrate synthase family. LeuA type 1 subfamily. In terms of assembly, homodimer. Mn(2+) serves as cofactor.

It localises to the cytoplasm. The catalysed reaction is 3-methyl-2-oxobutanoate + acetyl-CoA + H2O = (2S)-2-isopropylmalate + CoA + H(+). The protein operates within amino-acid biosynthesis; L-leucine biosynthesis; L-leucine from 3-methyl-2-oxobutanoate: step 1/4. Functionally, catalyzes the condensation of the acetyl group of acetyl-CoA with 3-methyl-2-oxobutanoate (2-ketoisovalerate) to form 3-carboxy-3-hydroxy-4-methylpentanoate (2-isopropylmalate). The sequence is that of 2-isopropylmalate synthase from Vibrio cholerae serotype O1 (strain ATCC 39315 / El Tor Inaba N16961).